The primary structure comprises 364 residues: Protein Wnt-16 (364 aa).

A signal peptide spans 1–29 (MDRAALLALPSLCALWAAVLSLLPCGTQG). Intrachain disulfides connect C81/C92, C138/C146, and C148/C167. The N-linked (GlcNAc...) asparagine glycan is linked to N142. N-linked (GlcNAc...) asparagine glycosylation occurs at N188. Cystine bridges form between C220–C234, C222–C229, C293–C324, C309–C319, C323–C363, C339–C354, C341–C351, and C346–C347. S226 is lipidated: O-palmitoleoyl serine; by PORCN. The N-linked (GlcNAc...) asparagine glycan is linked to N310.

The protein belongs to the Wnt family. In terms of processing, palmitoleoylation is required for efficient binding to frizzled receptors. Depalmitoleoylation leads to Wnt signaling pathway inhibition.

It localises to the secreted. The protein resides in the extracellular space. Its subcellular location is the extracellular matrix. In terms of biological role, ligand for members of the frizzled family of seven transmembrane receptors. Probable developmental protein. May be a signaling molecule which affects the development of discrete regions of tissues. Is likely to signal over only few cell diameters. In Mus musculus (Mouse), this protein is Protein Wnt-16 (Wnt16).